The chain runs to 209 residues: Orotate phosphoribosyltransferase (209 aa).

Residues Arg-96, Lys-100, His-102, and 122–130 (EDLISTGGS) each bind 5-phospho-alpha-D-ribose 1-diphosphate. Ser-126 contacts orotate.

It belongs to the purine/pyrimidine phosphoribosyltransferase family. PyrE subfamily. As to quaternary structure, homodimer. It depends on Mg(2+) as a cofactor.

The catalysed reaction is orotidine 5'-phosphate + diphosphate = orotate + 5-phospho-alpha-D-ribose 1-diphosphate. It functions in the pathway pyrimidine metabolism; UMP biosynthesis via de novo pathway; UMP from orotate: step 1/2. Functionally, catalyzes the transfer of a ribosyl phosphate group from 5-phosphoribose 1-diphosphate to orotate, leading to the formation of orotidine monophosphate (OMP). In Streptococcus gordonii (strain Challis / ATCC 35105 / BCRC 15272 / CH1 / DL1 / V288), this protein is Orotate phosphoribosyltransferase.